We begin with the raw amino-acid sequence, 376 residues long: MARPWNFSAGPSALPESVLQQAAAEMLDWHGSGMSVMEMSHRGRQFVQICDEAEADLRELMNVPADYAIMFMQGGGLGENAIVPMNLIGRRGLPAADFVVTGHWSTRSHKEAGRYGDAQIAASSAQAVNIDGHEQRPFTWVPPLSDWRVRPEAAYLHLCSNETIGGVEFTEWPDLAAFGAPDVPLVVDASSHFLSRPLDVTRTGLLFAGAQKNAGPAGVTVVIARRDLLGKALSICPSAFDYANVAAEHSRYNTPPTFAIYVAGLVYKWVKAQGGVQGLEAANKAKADLLYGYLDASGFYRNPVHPAVRSRMNVPFVLHDESLNDAFLKGAEAAGLLALKGHKSVGGMRASIYNAMPLAGVQALVDYLKEFERLHG.

Residue Arg-42 coordinates L-glutamate. The pyridoxal 5'-phosphate site is built by Trp-104, Thr-163, Asp-188, and Gln-211. Residue Lys-212 is modified to N6-(pyridoxal phosphate)lysine. Position 253–254 (253–254 (NT)) interacts with pyridoxal 5'-phosphate.

The protein belongs to the class-V pyridoxal-phosphate-dependent aminotransferase family. SerC subfamily. As to quaternary structure, homodimer. It depends on pyridoxal 5'-phosphate as a cofactor.

The protein resides in the cytoplasm. The enzyme catalyses O-phospho-L-serine + 2-oxoglutarate = 3-phosphooxypyruvate + L-glutamate. The catalysed reaction is 4-(phosphooxy)-L-threonine + 2-oxoglutarate = (R)-3-hydroxy-2-oxo-4-phosphooxybutanoate + L-glutamate. It functions in the pathway amino-acid biosynthesis; L-serine biosynthesis; L-serine from 3-phospho-D-glycerate: step 2/3. It participates in cofactor biosynthesis; pyridoxine 5'-phosphate biosynthesis; pyridoxine 5'-phosphate from D-erythrose 4-phosphate: step 3/5. Its function is as follows. Catalyzes the reversible conversion of 3-phosphohydroxypyruvate to phosphoserine and of 3-hydroxy-2-oxo-4-phosphonooxybutanoate to phosphohydroxythreonine. This is Phosphoserine aminotransferase from Bordetella avium (strain 197N).